A 728-amino-acid polypeptide reads, in one-letter code: 1,4-alpha-glucan branching enzyme GlgB (728 aa).

The active-site Nucleophile is Asp405. Glu458 serves as the catalytic Proton donor.

Belongs to the glycosyl hydrolase 13 family. GlgB subfamily. Monomer.

It catalyses the reaction Transfers a segment of a (1-&gt;4)-alpha-D-glucan chain to a primary hydroxy group in a similar glucan chain.. It functions in the pathway glycan biosynthesis; glycogen biosynthesis. In terms of biological role, catalyzes the formation of the alpha-1,6-glucosidic linkages in glycogen by scission of a 1,4-alpha-linked oligosaccharide from growing alpha-1,4-glucan chains and the subsequent attachment of the oligosaccharide to the alpha-1,6 position. In Citrobacter koseri (strain ATCC BAA-895 / CDC 4225-83 / SGSC4696), this protein is 1,4-alpha-glucan branching enzyme GlgB.